The following is a 598-amino-acid chain: Probable translation initiation factor IF-2 (598 aa).

A tr-type G domain is found at 8-226 (IRQPIISVLG…VTGLAQRFLE (219 aa)). Residues 17-24 (GHVDHGKT) form a G1 region. 17-24 (GHVDHGKT) serves as a coordination point for GTP. A G2 region spans residues 42–46 (GITQH). Positions 81–84 (DTPG) are G3. GTP contacts are provided by residues 81–85 (DTPGH) and 135–138 (NKVD). Residues 135 to 138 (NKVD) form a G4 region. Residues 203–205 (SGV) form a G5 region.

It belongs to the TRAFAC class translation factor GTPase superfamily. Classic translation factor GTPase family. IF-2 subfamily.

In terms of biological role, function in general translation initiation by promoting the binding of the formylmethionine-tRNA to ribosomes. Seems to function along with eIF-2. This Methanopyrus kandleri (strain AV19 / DSM 6324 / JCM 9639 / NBRC 100938) protein is Probable translation initiation factor IF-2.